Consider the following 489-residue polypeptide: MMIMFFLLCSIIFVVTIIIFRKQKRGKKRNTLPSPPGLPLIGNLHQLGRHPHRSLCSLSHRYGPLMLLHFGRVPVLVVSSAELARDVLKTHDRVFASRPRSKIFEKLLYDKHDVASAPYGEYWRQMKSVCVLHLFSNKMVRSFREVREEEISLMMEKIRKSISLPVNLSKILVSLTNDVICKVALGRKYGGETDFKELMERLNKLLGTFSVGSYVPWLAWIDWIRGLDCQLEKTANDVDKFFERVVQDHVDGNRDMTDFVDVLLAIQRDKTVGFEINRVSIKAIVMNVFVGGTDTSSTLMEWAMTELLRHPKCLKRLQEEVRTICKDKSSVSEEEIQNMSYLKAVIKEALRLHPPLPLMVPHESTQDVRLGDHHIPAGTQVLINAWAIGREAATWGPDVEEFRPERHLDSSVDYRGQAFELIPFGSGRRICPAISFAVVLNEVVLANLVHRFDWRLSVESTEDQTEVAESTGIAIHRMFPLYAIASNTT.

A helical membrane pass occupies residues 1 to 21; sequence MMIMFFLLCSIIFVVTIIIFR. Heme is bound at residue Cys-431.

It belongs to the cytochrome P450 family. It depends on heme as a cofactor.

The protein resides in the membrane. The chain is Cytochrome P450 71A26 (CYP71A26) from Arabidopsis thaliana (Mouse-ear cress).